The chain runs to 446 residues: tRNA modification GTPase MnmE (446 aa).

Residues R24, E81, and K120 each contribute to the (6S)-5-formyl-5,6,7,8-tetrahydrofolate site. Positions 216–368 (GLHAVLIGPP…LHIRLRELAL (153 aa)) constitute a TrmE-type G domain. N226 serves as a coordination point for K(+). Residues 226–231 (NAGKSS), 245–251 (TDVAGTT), and 270–273 (DTAG) each bind GTP. S230 contacts Mg(2+). The K(+) site is built by T245, V247, and T250. T251 is a binding site for Mg(2+). K446 contributes to the (6S)-5-formyl-5,6,7,8-tetrahydrofolate binding site.

This sequence belongs to the TRAFAC class TrmE-Era-EngA-EngB-Septin-like GTPase superfamily. TrmE GTPase family. As to quaternary structure, homodimer. Heterotetramer of two MnmE and two MnmG subunits. K(+) is required as a cofactor.

It localises to the cytoplasm. Exhibits a very high intrinsic GTPase hydrolysis rate. Involved in the addition of a carboxymethylaminomethyl (cmnm) group at the wobble position (U34) of certain tRNAs, forming tRNA-cmnm(5)s(2)U34. This is tRNA modification GTPase MnmE from Xanthomonas oryzae pv. oryzae (strain PXO99A).